Consider the following 146-residue polypeptide: Heat-stable 19 kDa antigen (146 aa).

Residues 1–20 form the signal peptide; that stretch reads MKFSLLSAIAAAVFVPFTSA.

Belongs to the cerato-platanin family. In terms of processing, glycosylated.

The protein resides in the secreted. The sequence is that of Heat-stable 19 kDa antigen (CSA) from Coccidioides posadasii (strain C735) (Valley fever fungus).